A 276-amino-acid chain; its full sequence is Probable NADH-ubiquinone oxidoreductase 30.4 kDa subunit, mitochondrial (276 aa).

The interval 248–276 is disordered; sequence EPVGEGKDFTPESFKLPTPQPEPEQEEKK.

It belongs to the complex I 30 kDa subunit family. Complex I is composed of about 30 different subunits. This is a component of the iron-sulfur protein fraction.

The protein localises to the mitochondrion inner membrane. It carries out the reaction a ubiquinone + NADH + 5 H(+)(in) = a ubiquinol + NAD(+) + 4 H(+)(out). Functionally, core subunit of the mitochondrial membrane respiratory chain NADH dehydrogenase (Complex I) that is believed to belong to the minimal assembly required for catalysis. Complex I functions in the transfer of electrons from NADH to the respiratory chain. The immediate electron acceptor for the enzyme is believed to be ubiquinone. Essential for N-alkane assimilation. The polypeptide is Probable NADH-ubiquinone oxidoreductase 30.4 kDa subunit, mitochondrial (ALI1) (Candida maltosa (Yeast)).